Reading from the N-terminus, the 506-residue chain is (+)-vincadifformine 19-hydroxylase (506 aa).

The Lumenal portion of the chain corresponds to 1–4 (MELD). The helical transmembrane segment at 5-25 (ECSPSIFIISFIFIAISIAIL) threads the bilayer. At 26 to 506 (RRIRPKKTKA…DLHLIPTSYM (481 aa)) the chain is on the cytoplasmic side. Residue C450 coordinates heme.

Belongs to the cytochrome P450 family. Heme serves as cofactor. In terms of tissue distribution, accumulates progressively in roots.

Its subcellular location is the endoplasmic reticulum membrane. The enzyme catalyses (+)-vincadifformine + reduced [NADPH--hemoprotein reductase] + O2 = (+)-minovincinine + oxidized [NADPH--hemoprotein reductase] + H2O + H(+). It participates in alkaloid biosynthesis. The enantiomer (-)-vincadifformine acts as a competitive inhibitor. Its function is as follows. Component of the monoterpenoid indole alkaloids (MIAs, e.g. echitovenine, tabersonine, lochnericine, 19-hydroxytabersonine and horhammericine) biosynthetic pathway; MIAs are used in cancer treatment and other medical applications. Cytochrome P450 catalyzing the hydroxylation of (+)-vincadifformine to (+)-minovincinine. This is (+)-vincadifformine 19-hydroxylase from Catharanthus roseus (Madagascar periwinkle).